The chain runs to 989 residues: Phosphoenolpyruvate carboxylase (989 aa).

Active-site residues include H175 and K630.

This sequence belongs to the PEPCase type 1 family. The cofactor is Mg(2+).

The catalysed reaction is oxaloacetate + phosphate = phosphoenolpyruvate + hydrogencarbonate. Functionally, forms oxaloacetate, a four-carbon dicarboxylic acid source for the tricarboxylic acid cycle. The polypeptide is Phosphoenolpyruvate carboxylase (Prochlorococcus marinus (strain MIT 9215)).